An 85-amino-acid chain; its full sequence is Contulakin-Lt2 (85 aa).

The signal sequence occupies residues 1–22 (MQMAYWVMVMMMVGITAPLSEG). Positions 23–61 (RKLNDAIRGLVPNDLTPQLLQSLVSRRHRVFHLDNTYLK) are excised as a propeptide. Cysteines 65 and 70 form a disulfide. Residues 76 to 85 (RRRDLKKRNK) constitute a propeptide that is removed on maturation.

Belongs to the conotoxin C superfamily. In terms of tissue distribution, expressed by the venom duct.

The protein localises to the secreted. In terms of biological role, acts as an agonist of neurotensin receptors. It binds to human neurotensin type 1 receptor (NTSR1), rat neurotensin types 1 and 2 receptors (NTSR1/NTSR2) and mouse neurotensin type 3 receptor (SORT1). In Conus litteratus (Lettered cone), this protein is Contulakin-Lt2.